A 680-amino-acid chain; its full sequence is tRNA 5-methylaminomethyl-2-thiouridine biosynthesis bifunctional protein MnmC (680 aa).

Positions 1–251 (MSQNHILPQN…KREMIAGTLT (251 aa)) are tRNA (mnm(5)s(2)U34)-methyltransferase. The tract at residues 277–680 (IGGGVASAAL…RLLKGKPLDI (404 aa)) is FAD-dependent cmnm(5)s(2)U34 oxidoreductase.

It in the N-terminal section; belongs to the methyltransferase superfamily. tRNA (mnm(5)s(2)U34)-methyltransferase family. This sequence in the C-terminal section; belongs to the DAO family. It depends on FAD as a cofactor.

The protein resides in the cytoplasm. The enzyme catalyses 5-aminomethyl-2-thiouridine(34) in tRNA + S-adenosyl-L-methionine = 5-methylaminomethyl-2-thiouridine(34) in tRNA + S-adenosyl-L-homocysteine + H(+). Catalyzes the last two steps in the biosynthesis of 5-methylaminomethyl-2-thiouridine (mnm(5)s(2)U) at the wobble position (U34) in tRNA. Catalyzes the FAD-dependent demodification of cmnm(5)s(2)U34 to nm(5)s(2)U34, followed by the transfer of a methyl group from S-adenosyl-L-methionine to nm(5)s(2)U34, to form mnm(5)s(2)U34. This chain is tRNA 5-methylaminomethyl-2-thiouridine biosynthesis bifunctional protein MnmC, found in Aliivibrio fischeri (strain ATCC 700601 / ES114) (Vibrio fischeri).